A 390-amino-acid chain; its full sequence is GTPase Obg (390 aa).

An Obg domain is found at 1–159; sequence MKFVDEASIL…RELLLELMLL (159 aa). Residues 127–147 are disordered; it reads NTRFKSSVNRTPRQKTNGTPG. Residues 129 to 145 show a composition bias toward polar residues; that stretch reads RFKSSVNRTPRQKTNGT. An OBG-type G domain is found at 160–333; that stretch reads ADVGMLGMPN…LCWDVMTFII (174 aa). GTP is bound by residues 166–173, 191–195, 213–216, 283–286, and 314–316; these read GMPNAGKS, FTTLV, DIPG, NKID, and SAA. S173 and T193 together coordinate Mg(2+).

This sequence belongs to the TRAFAC class OBG-HflX-like GTPase superfamily. OBG GTPase family. In terms of assembly, monomer. Mg(2+) is required as a cofactor.

The protein resides in the cytoplasm. An essential GTPase which binds GTP, GDP and possibly (p)ppGpp with moderate affinity, with high nucleotide exchange rates and a fairly low GTP hydrolysis rate. Plays a role in control of the cell cycle, stress response, ribosome biogenesis and in those bacteria that undergo differentiation, in morphogenesis control. The sequence is that of GTPase Obg from Escherichia coli (strain K12 / DH10B).